A 301-amino-acid chain; its full sequence is Tyrosine recombinase XerD (301 aa).

Residues Pro6–Lys89 enclose the Core-binding (CB) domain. Residues Arg108–His293 form the Tyr recombinase domain. Residues Arg152, Lys174, His245, Arg248, and His271 contribute to the active site. Tyr280 acts as the O-(3'-phospho-DNA)-tyrosine intermediate in catalysis.

Belongs to the 'phage' integrase family. XerD subfamily. Forms a cyclic heterotetrameric complex composed of two molecules of XerC and two molecules of XerD.

The protein resides in the cytoplasm. Its function is as follows. Site-specific tyrosine recombinase, which acts by catalyzing the cutting and rejoining of the recombining DNA molecules. The XerC-XerD complex is essential to convert dimers of the bacterial chromosome into monomers to permit their segregation at cell division. It also contributes to the segregational stability of plasmids. This Chlamydia muridarum (strain MoPn / Nigg) protein is Tyrosine recombinase XerD.